The following is a 230-amino-acid chain: Orotidine 5'-phosphate decarboxylase (230 aa).

Substrate contacts are provided by residues Asp-10, Lys-31, 58-67 (DLKLHDIPNT), Thr-117, Arg-179, Gln-188, Gly-208, and Arg-209. Lys-60 serves as the catalytic Proton donor.

This sequence belongs to the OMP decarboxylase family. Type 1 subfamily. As to quaternary structure, homodimer.

The enzyme catalyses orotidine 5'-phosphate + H(+) = UMP + CO2. The protein operates within pyrimidine metabolism; UMP biosynthesis via de novo pathway; UMP from orotate: step 2/2. In terms of biological role, catalyzes the decarboxylation of orotidine 5'-monophosphate (OMP) to uridine 5'-monophosphate (UMP). The protein is Orotidine 5'-phosphate decarboxylase of Staphylococcus aureus (strain bovine RF122 / ET3-1).